A 297-amino-acid chain; its full sequence is N-acetylmuramic acid 6-phosphate etherase (297 aa).

The SIS domain maps to 55 to 218; sequence ATDALKSGGR…STGAMVKFGK (164 aa). E83 functions as the Proton donor in the catalytic mechanism. Residue E114 is part of the active site.

It belongs to the GCKR-like family. MurNAc-6-P etherase subfamily. As to quaternary structure, homodimer.

The enzyme catalyses N-acetyl-D-muramate 6-phosphate + H2O = N-acetyl-D-glucosamine 6-phosphate + (R)-lactate. It functions in the pathway amino-sugar metabolism; 1,6-anhydro-N-acetylmuramate degradation. Its pathway is amino-sugar metabolism; N-acetylmuramate degradation. The protein operates within cell wall biogenesis; peptidoglycan recycling. Specifically catalyzes the cleavage of the D-lactyl ether substituent of MurNAc 6-phosphate, producing GlcNAc 6-phosphate and D-lactate. Together with AnmK, is also required for the utilization of anhydro-N-acetylmuramic acid (anhMurNAc) either imported from the medium or derived from its own cell wall murein, and thus plays a role in cell wall recycling. In Enterobacter sp. (strain 638), this protein is N-acetylmuramic acid 6-phosphate etherase.